A 308-amino-acid chain; its full sequence is PAK4-inhibitor inka1 (308 aa).

The disordered stretch occupies residues 81-105; it reads EEEESASDPSAVSSPSSERSLEFDS. A compositionally biased stretch (low complexity) spans 87–98; sequence SDPSAVSSPSSE. Inka box stretches follow at residues 164–201 and 281–308; these read DPEDWTTSLLTRGRNRQPLVLGDNSFADLIHNWMDLPE and DTDYYQFSALMKSGSRTPIVCNDIIGYI.

This sequence belongs to the INKA family. As to quaternary structure, interacts with pak4/pak5.

It localises to the nucleus. The protein resides in the cytoplasm. In terms of biological role, inhibitor of the serine/threonine-protein kinase pak4/pak5. Acts by binding pak4/pak5 in a substrate-like manner, inhibiting the protein kinase activity. Required for the proper migration of neural crest cells during embryonic development, probably by inhibiting pak4/pak5. The polypeptide is PAK4-inhibitor inka1 (Danio rerio (Zebrafish)).